We begin with the raw amino-acid sequence, 152 residues long: 3-hydroxyacyl-[acyl-carrier-protein] dehydratase FabZ (152 aa).

The active site involves His54.

It belongs to the thioester dehydratase family. FabZ subfamily.

Its subcellular location is the cytoplasm. The catalysed reaction is a (3R)-hydroxyacyl-[ACP] = a (2E)-enoyl-[ACP] + H2O. Functionally, involved in unsaturated fatty acids biosynthesis. Catalyzes the dehydration of short chain beta-hydroxyacyl-ACPs and long chain saturated and unsaturated beta-hydroxyacyl-ACPs. This chain is 3-hydroxyacyl-[acyl-carrier-protein] dehydratase FabZ, found in Shewanella woodyi (strain ATCC 51908 / MS32).